The chain runs to 155 residues: uncharacterized protein (155 aa).

This is an uncharacterized protein from Agrobacterium vitis (Rhizobium vitis).